We begin with the raw amino-acid sequence, 265 residues long: 6-carboxyhexanoate--CoA ligase (265 aa).

It belongs to the BioW family. As to quaternary structure, homodimer. Mg(2+) is required as a cofactor.

The catalysed reaction is heptanedioate + ATP + CoA = 6-carboxyhexanoyl-CoA + AMP + diphosphate. It functions in the pathway metabolic intermediate metabolism; pimeloyl-CoA biosynthesis; pimeloyl-CoA from pimelate: step 1/1. Functionally, catalyzes the transformation of pimelate into pimeloyl-CoA with concomitant hydrolysis of ATP to AMP. The polypeptide is 6-carboxyhexanoate--CoA ligase (Syntrophotalea carbinolica (strain DSM 2380 / NBRC 103641 / GraBd1) (Pelobacter carbinolicus)).